The chain runs to 314 residues: uncharacterized protein (314 aa).

An HTH araC/xylS-type domain is found at 192–289 (TEVKLHIKDN…GSSPGLFRSL (98 aa)). 2 consecutive DNA-binding regions (H-T-H motif) follow at residues 209–230 (TDVA…AAEL) and 257–279 (IKEI…SAKI).

This is an uncharacterized protein from Bacillus subtilis (strain 168).